The primary structure comprises 429 residues: Light-independent protochlorophyllide reductase subunit N (429 aa).

Residues Cys-32, Cys-57, and Cys-118 each coordinate [4Fe-4S] cluster.

Belongs to the BchN/ChlN family. In terms of assembly, protochlorophyllide reductase is composed of three subunits; BchL, BchN and BchB. Forms a heterotetramer of two BchB and two BchN subunits. [4Fe-4S] cluster is required as a cofactor.

The catalysed reaction is chlorophyllide a + oxidized 2[4Fe-4S]-[ferredoxin] + 2 ADP + 2 phosphate = protochlorophyllide a + reduced 2[4Fe-4S]-[ferredoxin] + 2 ATP + 2 H2O. It functions in the pathway porphyrin-containing compound metabolism; bacteriochlorophyll biosynthesis (light-independent). Functionally, component of the dark-operative protochlorophyllide reductase (DPOR) that uses Mg-ATP and reduced ferredoxin to reduce ring D of protochlorophyllide (Pchlide) to form chlorophyllide a (Chlide). This reaction is light-independent. The NB-protein (BchN-BchB) is the catalytic component of the complex. The protein is Light-independent protochlorophyllide reductase subunit N of Rhodopseudomonas palustris (strain ATCC BAA-98 / CGA009).